We begin with the raw amino-acid sequence, 263 residues long: Post-GPI attachment to proteins factor 2 (263 aa).

6 helical membrane passes run 16–36 (FVICIGGLPSSALLICVILSL), 69–89 (YIWRILIGLHIGPRLVVAIAF), 109–129 (FLCNLACFLNLLENFFLLALT), 143–163 (CFGGFAICSIIYMLLSTWLFN), 180–200 (YKILGAAIFVLCFFLGAYLYW), and 208–228 (PGIYTLFALVEYSAVLSNIFF).

This sequence belongs to the PGAP2 family.

It is found in the golgi apparatus membrane. The protein localises to the endoplasmic reticulum membrane. Involved in the lipid remodeling steps of GPI-anchor maturation. Required for stable expression of GPI-anchored proteins at the cell surface. The polypeptide is Post-GPI attachment to proteins factor 2 (Caenorhabditis elegans).